The sequence spans 75 residues: UPF0235 protein Mvan_2846 (75 aa).

The protein belongs to the UPF0235 family.

This Mycolicibacterium vanbaalenii (strain DSM 7251 / JCM 13017 / BCRC 16820 / KCTC 9966 / NRRL B-24157 / PYR-1) (Mycobacterium vanbaalenii) protein is UPF0235 protein Mvan_2846.